The following is a 334-amino-acid chain: Glycerol-3-phosphate dehydrogenase [NAD(P)+] 2 (334 aa).

The NADPH site is built by Trp-16, Arg-36, Arg-37, and Lys-110. Positions 110 and 140 each coordinate sn-glycerol 3-phosphate. Ala-144 contacts NADPH. Positions 195, 248, 258, 259, and 260 each coordinate sn-glycerol 3-phosphate. The Proton acceptor role is filled by Lys-195. Arg-259 provides a ligand contact to NADPH. NADPH contacts are provided by Val-282 and Glu-284.

Belongs to the NAD-dependent glycerol-3-phosphate dehydrogenase family.

It localises to the cytoplasm. It catalyses the reaction sn-glycerol 3-phosphate + NAD(+) = dihydroxyacetone phosphate + NADH + H(+). It carries out the reaction sn-glycerol 3-phosphate + NADP(+) = dihydroxyacetone phosphate + NADPH + H(+). Its pathway is membrane lipid metabolism; glycerophospholipid metabolism. Its function is as follows. Catalyzes the reduction of the glycolytic intermediate dihydroxyacetone phosphate (DHAP) to sn-glycerol 3-phosphate (G3P), the key precursor for phospholipid synthesis. This Mycobacterium tuberculosis (strain ATCC 25618 / H37Rv) protein is Glycerol-3-phosphate dehydrogenase [NAD(P)+] 2.